The following is a 194-amino-acid chain: Peptidyl-tRNA hydrolase (194 aa).

Histidine 22 acts as the Proton acceptor in catalysis. The tRNA site is built by tyrosine 67, asparagine 69, and asparagine 115.

This sequence belongs to the PTH family. In terms of assembly, monomer.

Its subcellular location is the cytoplasm. It carries out the reaction an N-acyl-L-alpha-aminoacyl-tRNA + H2O = an N-acyl-L-amino acid + a tRNA + H(+). Hydrolyzes ribosome-free peptidyl-tRNAs (with 1 or more amino acids incorporated), which drop off the ribosome during protein synthesis, or as a result of ribosome stalling. Functionally, catalyzes the release of premature peptidyl moieties from peptidyl-tRNA molecules trapped in stalled 50S ribosomal subunits, and thus maintains levels of free tRNAs and 50S ribosomes. In Granulibacter bethesdensis (strain ATCC BAA-1260 / CGDNIH1), this protein is Peptidyl-tRNA hydrolase.